A 946-amino-acid polypeptide reads, in one-letter code: Protocadherin alpha-10 (946 aa).

Positions 1–30 (MSCVAMKYCHESWCLLLSLLLFAIWEPGSG) are cleaved as a signal peptide. Cadherin domains follow at residues 31-134 (QLRY…PPVF), 135-243 (PTTE…APAF), 244-351 (DRAI…APKI), 352-456 (IVTS…APAF), 457-566 (AQSE…APTL), and 582-679 (VPRS…APKA). Topologically, residues 31–697 (QLRYSVPEEA…ASESSVVDVN (667 aa)) are extracellular. N-linked (GlcNAc...) asparagine glycosylation is present at Asn258. A glycan (N-linked (GlcNAc...) asparagine) is linked at Asn549. The chain crosses the membrane as a helical span at residues 698 to 718 (VYLIIAICAVSSLLVLTLVLY). Over 719–946 (TALRCSALPT…GNSTTDNSDQ (228 aa)) the chain is Cytoplasmic. 6 PXXP repeats span residues 734–737 (PGKP), 774–777 (PSVP), 795–798 (PRQP), 828–831 (PGGP), 869–872 (PGNP), and 887–890 (PGSP). The 6 X 4 AA repeats of P-X-X-P stretch occupies residues 734–890 (PGKPMLVCSS…PDKFIIPGSP (157 aa)). Disordered regions lie at residues 826-852 (AGPG…EVSP) and 865-946 (FKYG…NSDQ). Over residues 905-919 (DKSDFITFGKKEETK) the composition is skewed to basic and acidic residues.

It is found in the cell membrane. Potential calcium-dependent cell-adhesion protein. May be involved in the establishment and maintenance of specific neuronal connections in the brain. This Mus musculus (Mouse) protein is Protocadherin alpha-10.